We begin with the raw amino-acid sequence, 119 residues long: Anamorsin homolog (119 aa).

Polar residues predominate over residues 1–15 (MSSSATSTQAFSLKT). 2 disordered regions span residues 1–21 (MSSS…PIPD) and 33–119 (LKQA…TDDV). [2Fe-2S] cluster-binding residues include Cys-42, Cys-49, Cys-52, and Cys-54. Positions 42 to 54 (CTTRRRACKNCVC) are fe-S binding site A. 4 residues coordinate [4Fe-4S] cluster: Cys-81, Cys-84, Cys-92, and Cys-95. Short sequence motifs (cx2C motif) lie at residues 81–84 (CGNC) and 92–95 (CANC). The tract at residues 81 to 95 (CGNCSKGDAFRCANC) is fe-S binding site B.

Belongs to the anamorsin family. In terms of assembly, monomer. [2Fe-2S] cluster is required as a cofactor. Requires [4Fe-4S] cluster as cofactor.

It is found in the cytoplasm. The protein resides in the mitochondrion intermembrane space. In terms of biological role, component of the cytosolic iron-sulfur (Fe-S) protein assembly (CIA) machinery. Required for the maturation of extramitochondrial Fe-S proteins. Part of an electron transfer chain functioning in an early step of cytosolic Fe-S biogenesis, facilitating the de novo assembly of a [4Fe-4S] cluster on the cytosolic Fe-S scaffold complex. Electrons are transferred from NADPH via a FAD- and FMN-containing diflavin oxidoreductase. Together with the diflavin oxidoreductase, also required for the assembly of the diferric tyrosyl radical cofactor of ribonucleotide reductase (RNR), probably by providing electrons for reduction during radical cofactor maturation in the catalytic small subunit. This chain is Anamorsin homolog, found in Leishmania infantum.